The following is a 311-amino-acid chain: tRNA-cytidine(32) 2-sulfurtransferase (311 aa).

The interval 18–38 is disordered; that stretch reads KVGADHGPSEENGSSHPLFDN. A PP-loop motif motif is present at residues 77-82; that stretch reads SGGKDS. 3 residues coordinate [4Fe-4S] cluster: C152, C155, and C243.

The protein belongs to the TtcA family. As to quaternary structure, homodimer. It depends on Mg(2+) as a cofactor. Requires [4Fe-4S] cluster as cofactor.

The protein resides in the cytoplasm. It catalyses the reaction cytidine(32) in tRNA + S-sulfanyl-L-cysteinyl-[cysteine desulfurase] + AH2 + ATP = 2-thiocytidine(32) in tRNA + L-cysteinyl-[cysteine desulfurase] + A + AMP + diphosphate + H(+). Its pathway is tRNA modification. In terms of biological role, catalyzes the ATP-dependent 2-thiolation of cytidine in position 32 of tRNA, to form 2-thiocytidine (s(2)C32). The sulfur atoms are provided by the cysteine/cysteine desulfurase (IscS) system. The polypeptide is tRNA-cytidine(32) 2-sulfurtransferase (Agrobacterium fabrum (strain C58 / ATCC 33970) (Agrobacterium tumefaciens (strain C58))).